A 1698-amino-acid chain; its full sequence is MQNGTTIGIPPENERVTERAEPVPSDLLPNNSPVNSPTIDPTLSEIKDVAADHNEEPPSKRRKVAGSTPSRRSHSRAASPPWKKAGADGPTSKIVDGKRRSTRVSNVGPVEQPPSDAKPTRSSQKQYVSKAVSSQRNAAVSSPLPMSPSRSGINRRSLAGVAVNGSPSTTAKGSIGRRRRESPSPVSKRASTRTRPDNMDAYHPSNGVTPRSNSTKTRSTRSFQLASSDFREETADDIGNDGQDEHGQRIQRLRIKVKKPALSIQHPSHVLPTRKYGSFKEWLENEGTGPGRMLTMTDALEEAQKRRQVTEAMEPGGLLSSEVCSAFLPEPQEELPQQFSHQDHLVAHALYFKKLLDKEHRAHRQAAKSLAAACAEVWRKRNKDPEDILREQQEEMRGKRKQLAKDLKKMFELARAEIDRVRLARWEEEQKAKDQRALDRAIKQSTMLFEKRRLEILGETGSDAPETTTDDEEVETDNGSENDDEEGESNMSTETEEEDGDDRDDDVGLTAEELRLKYANLPDTNPHPDQSPYSDEDSEDSDDIAADNTPGDTSGGVNRSPPPDSSGQVELDEVDPVLIDDSDESTDMDDDMGDSDDDGYSEAESDDEDGGEPGLLGFFSAKDLSLSNLHQTNSGEGDTHQTGADGDRNEDSSFDESEFGSEDPDEVTLVPTGPTNKDLSTPATVTASAELEPAAMTPSIDQTSTEEPIAIGTETPIETVAEDAAALADTEPVDVDVLDTSTNDSVPPVMSPATNLLKQIERQQHEPYHSRAASSEASPGTVATKPSEPESVSSIEAPAEKHAQPSESPGPGLKTPIPHLLRGTLREYQHFGLDWLAGLYSNHINGILADEMGLGKTIQTIALLAHLAVEHGVWGPHLVVVPTSVILNWEMEFKKWCPGFKIMTYYGNQEERRQKRRGWMDDNSWNVLITSYQLVLQDQQVLKRRSWHYMILDEAHNIKNFRSQRWQALLTFRTRARLLLTGTPLQNNLTELWSLLFFLMPTDGDEAGIEGFADLRNFSEWFRRPVEQILEHGRETMDDEAKQVVTKLHTVLRPYILRRLKADVEKQMPGKYEHVVYCRLSKRQRYLYDGFMSRAQTKETLASGNYLSIINCLMQLRKVCNHPDLFETRPISTSFAMPRSVATEFETSEALVRRRLLYQHPLEKLDLDFLNLVPISREDISRRLADDSARIMAYAPFNTLRERQYHRTNWEMKFNGSTVQSTLEALENDCRKRRMAELERSLYFESKRHGRRPVYGSSLIEFLTADSKQRPTAHGPLRKRSYADWLSSQSSVLASMMMSLEERSQAMDGYIQRFACVTPAAVAAGVTEAALTPISTRHLTNKERFPPHDPFHEAQMRLSIAFPDKRLLQYDCGKLQRLDKLLRDLKAGGHRALIFTQMTKMLDVLEQFLNIHGHRYLRLDGTTKVEQRQILTDRFNNDNRILAFILSSRSGGLGINLTGADTVIFYDLDWNPAMDKQCQDRCHRIGQTRDVHIYRFVSEYTIESNILRKANQKRMLDDVVIQEGEFTTDYFTKLDVRDMIGNDEALKDEASAAMDRVLENRVTNTSRVFEQAEDKEDIDAAKNAQKELEHADDGDFDDRANANASGVTAASASASGAGQTPTQAGTPLPDEAQQSLNANNAEVAEDTADSDPSVGHIDDYLLRFMEWNMKDEPLVLPVDKSMKKSKKGKEHRLRKRRR.

The segment at 1–249 is disordered; sequence MQNGTTIGIP…NDGQDEHGQR (249 aa). The span at 12–21 shows a compositional bias: basic and acidic residues; the sequence is ENERVTERAE. The segment covering 28–41 has biased composition (polar residues); sequence LPNNSPVNSPTIDP. Residues 45–59 show a composition bias toward basic and acidic residues; sequence EIKDVAADHNEEPPS. The segment covering 120-140 has biased composition (polar residues); that stretch reads TRSSQKQYVSKAVSSQRNAAV. Low complexity predominate over residues 209–222; it reads TPRSNSTKTRSTRS. In terms of domain architecture, HSA spans 329-403; it reads PEPQEELPQQ…EEMRGKRKQL (75 aa). 2 disordered regions span residues 456–682 and 763–818; these read ILGE…LSTP and QQHE…TPIP. Composition is skewed to acidic residues over residues 468–507, 534–545, and 570–611; these read TTDD…DDDV, SDEDSEDSDDIA, and ELDE…EDGG. The span at 625 to 642 shows a compositional bias: polar residues; it reads SLSNLHQTNSGEGDTHQT. The span at 652-666 shows a compositional bias: acidic residues; sequence SSFDESEFGSEDPDE. A compositionally biased stretch (polar residues) spans 673 to 682; it reads GPTNKDLSTP. Positions 837-1002 constitute a Helicase ATP-binding domain; that stretch reads AGLYSNHING…WSLLFFLMPT (166 aa). 850–857 serves as a coordination point for ATP; sequence DEMGLGKT. The DEAH box motif lies at 953–956; it reads DEAH. Residues 1377 to 1527 form the Helicase C-terminal domain; that stretch reads RLDKLLRDLK…DVVIQEGEFT (151 aa). Over residues 1586 to 1600 the composition is skewed to basic and acidic residues; sequence KELEHADDGDFDDRA. Disordered regions lie at residues 1586-1632 and 1673-1698; these read KELE…PDEA and PLVL…KRRR. Low complexity predominate over residues 1601 to 1618; that stretch reads NANASGVTAASASASGAG. Basic residues predominate over residues 1683–1698; it reads KKSKKGKEHRLRKRRR.

Belongs to the SNF2/RAD54 helicase family. SWR1 subfamily. In terms of assembly, component of the SWR1 chromatin-remodeling complex.

Its subcellular location is the nucleus. It carries out the reaction ATP + H2O = ADP + phosphate + H(+). Its function is as follows. Catalytic component of the SWR1 complex which mediates the ATP-dependent exchange of histone H2A for the H2A variant HZT1 leading to transcriptional regulation of selected genes by chromatin remodeling. The chain is Helicase swr1 (swr1) from Emericella nidulans (strain FGSC A4 / ATCC 38163 / CBS 112.46 / NRRL 194 / M139) (Aspergillus nidulans).